The primary structure comprises 93 residues: Small ribosomal subunit protein uS19 (93 aa).

The protein belongs to the universal ribosomal protein uS19 family.

Its function is as follows. Protein S19 forms a complex with S13 that binds strongly to the 16S ribosomal RNA. The sequence is that of Small ribosomal subunit protein uS19 from Dehalococcoides mccartyi (strain ATCC BAA-2100 / JCM 16839 / KCTC 5957 / BAV1).